Reading from the N-terminus, the 149-residue chain is SsrA-binding protein (149 aa).

The tract at residues 121–149 (GKKQHDKRADELDKDSKREAQRAMKERQR) is disordered. Residues 127–149 (KRADELDKDSKREAQRAMKERQR) are compositionally biased toward basic and acidic residues.

The protein belongs to the SmpB family.

The protein localises to the cytoplasm. Required for rescue of stalled ribosomes mediated by trans-translation. Binds to transfer-messenger RNA (tmRNA), required for stable association of tmRNA with ribosomes. tmRNA and SmpB together mimic tRNA shape, replacing the anticodon stem-loop with SmpB. tmRNA is encoded by the ssrA gene; the 2 termini fold to resemble tRNA(Ala) and it encodes a 'tag peptide', a short internal open reading frame. During trans-translation Ala-aminoacylated tmRNA acts like a tRNA, entering the A-site of stalled ribosomes, displacing the stalled mRNA. The ribosome then switches to translate the ORF on the tmRNA; the nascent peptide is terminated with the 'tag peptide' encoded by the tmRNA and targeted for degradation. The ribosome is freed to recommence translation, which seems to be the essential function of trans-translation. In Dechloromonas aromatica (strain RCB), this protein is SsrA-binding protein.